The primary structure comprises 262 residues: 5'-nucleotidase SurE (262 aa).

Asp-9, Asp-10, Ser-40, and Asn-95 together coordinate a divalent metal cation.

Belongs to the SurE nucleotidase family. Requires a divalent metal cation as cofactor.

Its subcellular location is the cytoplasm. It carries out the reaction a ribonucleoside 5'-phosphate + H2O = a ribonucleoside + phosphate. In terms of biological role, nucleotidase that shows phosphatase activity on nucleoside 5'-monophosphates. The protein is 5'-nucleotidase SurE of Aliarcobacter butzleri (strain RM4018) (Arcobacter butzleri).